A 204-amino-acid polypeptide reads, in one-letter code: NADH-quinone oxidoreductase subunit C (204 aa).

It belongs to the complex I 30 kDa subunit family. In terms of assembly, NDH-1 is composed of 14 different subunits. Subunits NuoB, C, D, E, F, and G constitute the peripheral sector of the complex.

Its subcellular location is the cell inner membrane. The catalysed reaction is a quinone + NADH + 5 H(+)(in) = a quinol + NAD(+) + 4 H(+)(out). Its function is as follows. NDH-1 shuttles electrons from NADH, via FMN and iron-sulfur (Fe-S) centers, to quinones in the respiratory chain. The immediate electron acceptor for the enzyme in this species is believed to be ubiquinone. Couples the redox reaction to proton translocation (for every two electrons transferred, four hydrogen ions are translocated across the cytoplasmic membrane), and thus conserves the redox energy in a proton gradient. The polypeptide is NADH-quinone oxidoreductase subunit C (Polaromonas naphthalenivorans (strain CJ2)).